A 166-amino-acid chain; its full sequence is uncharacterized protein (166 aa).

The may interact with smn1 stretch occupies residues 1–58; it reads MSSEITEGDLQKFHDEHFNAKAVNLWNVAFAQNDRGGNSESANVEYTQSVERYPDGTI.

As to quaternary structure, part of the core SMN complex at least composed of smn1, yip11/gem2, gem6, gem7 and gem8. Interacts with smn1; the interaction is direct. Interacts with gem7; the interaction is direct.

It is found in the cytoplasm. It localises to the nucleus. The SMN complex catalyzes the assembly of small nuclear ribonucleoproteins (snRNPs), the building blocks of the spliceosome, and thereby plays an important role in the splicing of cellular pre-mRNAs. Most spliceosomal snRNPs contain a common set of Sm proteins SNRPB, SNRPD1, SNRPD2, SNRPD3, SNRPE, SNRPF and SNRPG that assemble in a heptameric protein ring on the Sm site of the small nuclear RNA to form the core snRNP (Sm core). In the cytosol, the Sm proteins SNRPD1, SNRPD2, SNRPE, SNRPF and SNRPG are trapped in an inactive 6S pICln-Sm complex by the chaperone CLNS1A that controls the assembly of the core snRNP. To assemble core snRNPs, the SMN complex accepts the trapped 5Sm proteins from CLNS1A forming an intermediate. Binding of snRNA inside 5Sm triggers eviction of the SMN complex, thereby allowing binding of SNRPD3 and SNRPB to complete assembly of the core snRNP. This is an uncharacterized protein from Schizosaccharomyces pombe (strain 972 / ATCC 24843) (Fission yeast).